Reading from the N-terminus, the 263-residue chain is Polyglutamine-binding protein 1 (263 aa).

The WW domain occupies Glu-46–Asp-80. Ser-94 carries the phosphoserine modification. The interval Ser-94–Asp-263 is disordered. Positions Ala-99–Glu-173 are enriched in basic and acidic residues. 14 consecutive repeat copies span residues Asp-104–Ser-110, Asp-111–Ser-117, Asp-118–Ser-124, Asp-125–Ser-131, Glu-132–Ser-138, Asp-139–Arg-140, Asp-141–Arg-142, Glu-143–Arg-144, Asp-150–Arg-151, Glu-152–Arg-153, Glu-154–Arg-155, Asp-156–Arg-157, Asp-158–Arg-159, and Asp-160–Arg-161. Positions Asp-104–Ser-138 are 5 X 7 AA approximate tandem repeats of D-R-[SG]-H-D-K-S. The tract at residues Asp-139–Arg-144 is 3 X 2 AA tandem repeats of [DE]-R. Residues Asp-150–Arg-161 form a 6 X 2 AA tandem repeats of [DE]-R region. Positions Tyr-243 to Asn-253 are important for interaction with TXNL4A. Residue Ser-245 is modified to Phosphoserine.

As to quaternary structure, interacts with POU3F2/Brn-2, ATXN1, TXNL4A, HTT and AR. Interaction with ATXN1 correlates positively with the length of the polyglutamine tract. Interacts with RNA polymerase II large subunit in a phosphorylation-dependent manner. Forms a ternary complex with ATXN1 mutant and phosphorylated RNA polymerase II. Interacts (via C-terminus) with TXNL4A and CD2BP2. Interacts (via WW domain) with ATN1 and SF3B1, and may interact with additional splice factors. Interacts (via WW domain) with WBP11; Leading to reduce interaction between PQBP1 and TXNL4A. Interacts with CAPRIN1. Interacts with DDX1. Interacts with SFPQ. Interacts with KHSRP.

It is found in the nucleus. Its subcellular location is the nucleus speckle. The protein resides in the cytoplasmic granule. In terms of biological role, intrinsically disordered protein that acts as a scaffold, and which is involved in different processes, such as pre-mRNA splicing, transcription regulation, innate immunity and neuron development. Interacts with splicing-related factors via the intrinsically disordered region and regulates alternative splicing of target pre-mRNA species. May suppress the ability of POU3F2 to transactivate the DRD1 gene in a POU3F2 dependent manner. Can activate transcription directly or via association with the transcription machinery. May be involved in ATXN1 mutant-induced cell death. The interaction with ATXN1 mutant reduces levels of phosphorylated RNA polymerase II large subunit. Involved in the assembly of cytoplasmic stress granule, possibly by participating in the transport of neuronal RNA granules. Also acts as an innate immune sensor of infection by retroviruses, by detecting the presence of reverse-transcribed DNA in the cytosol. Directly binds retroviral reverse-transcribed DNA in the cytosol and interacts with CGAS, leading to activate the cGAS-STING signaling pathway, triggering type-I interferon production. The sequence is that of Polyglutamine-binding protein 1 (PQBP1) from Bos taurus (Bovine).